A 326-amino-acid chain; its full sequence is Mitochondrial glycine transporter (326 aa).

Solcar repeat units follow at residues 22-106 (SKTT…LRTS), 135-216 (SANL…LKRY), and 228-312 (SSSS…LILR). A run of 6 helical transmembrane segments spans residues 28 to 53 (FGAG…TRVQ), 81 to 107 (GTLP…RTSL), 138 to 163 (LATG…VRYE), 191 to 214 (GFGA…EQLK), 232 to 258 (INFV…KTRL), and 287 to 305 (GLGL…AWTV).

This sequence belongs to the mitochondrial carrier (TC 2.A.29) family. SLC25A38 subfamily.

It localises to the mitochondrion inner membrane. It catalyses the reaction glycine(in) = glycine(out). Mitochondrial glycine transporter that imports glycine into the mitochondrial matrix. Plays an important role in providing glycine for the first enzymatic step in heme biosynthesis, the condensation of glycine with succinyl-CoA to produce 5-aminolevulinate (ALA) in the mitochondrial matrix. The sequence is that of Mitochondrial glycine transporter from Emericella nidulans (strain FGSC A4 / ATCC 38163 / CBS 112.46 / NRRL 194 / M139) (Aspergillus nidulans).